The primary structure comprises 522 residues: Transactivator/viroplasmin protein (522 aa).

The segment at 488–522 (DASADEGTTDKSGPPPTRSIVEKEDVPNTSSKQVD) is disordered.

The protein belongs to the caulimoviridae viroplasmin family.

It is found in the host cytoplasm. Functionally, enhances the ribosomal termination-reinitiation event leading to the translation of major open reading frames on the polycistronic viral RNAs. In Cauliflower mosaic virus (strain D/H) (CaMV), this protein is Transactivator/viroplasmin protein.